Here is a 251-residue protein sequence, read N- to C-terminus: Hydroxyacylglutathione hydrolase (251 aa).

Residues His-59, His-61, Asp-63, His-64, His-118, Asp-141, and His-179 each coordinate Zn(2+).

The protein belongs to the metallo-beta-lactamase superfamily. Glyoxalase II family. In terms of assembly, monomer. The cofactor is Zn(2+).

The enzyme catalyses an S-(2-hydroxyacyl)glutathione + H2O = a 2-hydroxy carboxylate + glutathione + H(+). It functions in the pathway secondary metabolite metabolism; methylglyoxal degradation; (R)-lactate from methylglyoxal: step 2/2. Functionally, thiolesterase that catalyzes the hydrolysis of S-D-lactoyl-glutathione to form glutathione and D-lactic acid. This Prochlorococcus marinus (strain NATL2A) protein is Hydroxyacylglutathione hydrolase.